We begin with the raw amino-acid sequence, 81 residues long: MKTLLLTLVVVTIVFLDLGYTMTCCNQQSSQPKTTTTCAESSCYKKTWRDHRGTITERGCGCPNVKPGVQINCCKTDECNN.

The first 21 residues, 1-21 (MKTLLLTLVVVTIVFLDLGYT), serve as a signal peptide directing secretion. Cystine bridges form between cysteine 24-cysteine 43, cysteine 38-cysteine 60, cysteine 62-cysteine 73, and cysteine 74-cysteine 79.

Belongs to the three-finger toxin family. Short-chain subfamily. Type I alpha-neurotoxin sub-subfamily. Expressed by the venom gland.

It localises to the secreted. In terms of biological role, binds to muscle nicotinic acetylcholine receptor (nAChR) and inhibit acetylcholine from binding to the receptor, thereby impairing neuromuscular transmission. This chain is Short neurotoxin 1, found in Notechis scutatus scutatus (Mainland tiger snake).